A 185-amino-acid polypeptide reads, in one-letter code: UPF0301 protein Csal_0058 (185 aa).

Belongs to the UPF0301 (AlgH) family.

The protein is UPF0301 protein Csal_0058 of Chromohalobacter salexigens (strain ATCC BAA-138 / DSM 3043 / CIP 106854 / NCIMB 13768 / 1H11).